The chain runs to 304 residues: N-acetylmuramic acid 6-phosphate etherase (304 aa).

An SIS domain is found at 60-221; sequence GVSVLRHGGR…STAVMVRLGY (162 aa). The Proton donor role is filled by Glu-88. Glu-119 is an active-site residue.

The protein belongs to the GCKR-like family. MurNAc-6-P etherase subfamily. Homodimer.

It carries out the reaction N-acetyl-D-muramate 6-phosphate + H2O = N-acetyl-D-glucosamine 6-phosphate + (R)-lactate. It participates in amino-sugar metabolism; N-acetylmuramate degradation. Its function is as follows. Specifically catalyzes the cleavage of the D-lactyl ether substituent of MurNAc 6-phosphate, producing GlcNAc 6-phosphate and D-lactate. In Thermobifida fusca (strain YX), this protein is N-acetylmuramic acid 6-phosphate etherase.